Here is a 588-residue protein sequence, read N- to C-terminus: Disabled homolog 1 (588 aa).

A disordered region spans residues 1–26 (MSTETELQVAVKTSAKKDSRKKGQDR). A compositionally biased stretch (basic and acidic residues) spans 15 to 26 (AKKDSRKKGQDR). A PID domain is found at 36–189 (KGEGVRYKAK…CEQAVYQTIL (154 aa)). Phosphotyrosine is present on residues tyrosine 198, tyrosine 220, and tyrosine 232. 4 disordered regions span residues 224–243 (TSQK…NSQP), 420–444 (LATV…QKMG), 451–470 (FQMV…PSLT), and 502–588 (LTPV…QDGS). The segment covering 424-436 (PGTNDSARSSPQS) has biased composition (polar residues). Composition is skewed to low complexity over residues 503–512 (TPVTSTTPST) and 523–534 (SSPSKSSASHVS). Phosphoserine; by CDK5 is present on serine 524. Over residues 537–546 (TADDIFEEGF) the composition is skewed to acidic residues.

As to quaternary structure, associates with the SH2 domains of SRC, FYN and ABL. Interacts (phosphorylated on tyrosine residues) with CRK and CRKL (via respective SH2 domain). Interacts with SIAH1, LRP8 and VLDLR. Interacts with LRP1. Interacts with APLP1 (via NPXY motif). Interacts with DAB2IP. Interacts with ZSWIM8. In terms of processing, phosphorylated by FYN on Tyr-198 and Tyr-220 upon reelin induction in embryonic neurons. Also found phosphorylated on Tyr-232 upon reelin induction. Also phosphorylated on Ser-524 independently of reelin signaling. Post-translationally, ubiquitinated by various cullin-5-RING E3 ubiquitin-protein ligase complexes (ECS complexes) following ligand-binding and phosphorylation, leading to its degradation. Ubiquitinated by the ECS(SOCS7) complex in the cortical plate of the developing cerebral cortex following ligand-binding and phosphorylation by FYN, leading to its degradation by the proteasome. Recognized by ZSWIM8 through a disorder targets misorder mechanism that eliminates misfolded DAB1 via ubiquitination and proteasomal degradation. Expressed mainly in brain. Specifically expressin in cortical neurons.

Its subcellular location is the cytoplasm. Functionally, signaling adapter of the reelin-mediated signaling pathway, which regulates the migration and differentiation of postmitotic neurons during brain development. Mediates intracellular transduction of Reelin signaling following reelin (RELN)-binding to its receptor: acts by docking proteins through its phosphotyrosine residues and PID domain. This Mus musculus (Mouse) protein is Disabled homolog 1.